A 138-amino-acid chain; its full sequence is Protein NrdI (138 aa).

The protein belongs to the NrdI family.

Its function is as follows. Probably involved in ribonucleotide reductase function. In Beutenbergia cavernae (strain ATCC BAA-8 / DSM 12333 / CCUG 43141 / JCM 11478 / NBRC 16432 / NCIMB 13614 / HKI 0122), this protein is Protein NrdI.